A 214-amino-acid polypeptide reads, in one-letter code: Cytochrome b (214 aa).

4 consecutive transmembrane segments (helical) span residues 31-51, 75-96, 111-131, and 176-196; these read FGSM…FLAI, WIMQ…YIHI, WLSG…GYVL, and FFAL…IHIL. Heme b-binding residues include histidine 81 and histidine 95. Residues histidine 180 and histidine 194 each contribute to the heme b site. Histidine 199 lines the a ubiquinone pocket.

This sequence belongs to the cytochrome b family. The cytochrome bc1 complex contains 3 respiratory subunits (MT-CYB, CYC1 and UQCRFS1), 2 core proteins (UQCRC1 and UQCRC2) and probably 6 low-molecular weight proteins. The cofactor is heme b.

It is found in the mitochondrion inner membrane. In terms of biological role, component of the ubiquinol-cytochrome c reductase complex (complex III or cytochrome b-c1 complex) that is part of the mitochondrial respiratory chain. The b-c1 complex mediates electron transfer from ubiquinol to cytochrome c. Contributes to the generation of a proton gradient across the mitochondrial membrane that is then used for ATP synthesis. The sequence is that of Cytochrome b (MT-CYB) from Bothrops bilineatus (Green jararaca).